We begin with the raw amino-acid sequence, 104 residues long: Large ribosomal subunit protein bL21 (104 aa).

This sequence belongs to the bacterial ribosomal protein bL21 family. As to quaternary structure, part of the 50S ribosomal subunit. Contacts protein L20.

Its function is as follows. This protein binds to 23S rRNA in the presence of protein L20. This chain is Large ribosomal subunit protein bL21, found in Helicobacter pylori (strain HPAG1).